The primary structure comprises 495 residues: MSESNELIEQRIQKIEELKKQGINPYPVRFFPDSKSKDIAEKFEKNPTGPETKFKLGGRLHSKRVMGKASFAHLKDNSGIIQLYATKDDLGETQYSIFKSLDLGDIIGLEGYLFKTQKGEITLHVTSVELLAKCIRPLPVVKEKDGVVYDAFADVEQRYRMRYVDLIVNDHVRDTFITRSKIVSEIRSFLTQEGFLEVETPMMQPIAGGAAARPFVTHHNTLDMQLFLRIAPELYLKRLIVGGMDRVFELNRNFRNEGISTKHNPEFTMMEAYMAFGDMSTMLDLTERLITHLAQKICGTLKIQYGKDLIDLSPPWKRTTYVDIIKEYSGIDFSQIISLEEAKKKASELKVDVSKCQTIWKVADEVFSEKAEPNLIQPIFITDYPKELSPLAKSNPDKPGYVERFEPYVAGREIGNAFTELNDPFDQKERFEDQVKQREAGDDEAFMMDEDYIRALEYGMPPTGGLGIGIDRLVMLLTNSHSIRDTILFPLMRPE.

Positions 406 and 413 each coordinate Mg(2+).

Belongs to the class-II aminoacyl-tRNA synthetase family. Homodimer. Mg(2+) is required as a cofactor.

It localises to the cytoplasm. The catalysed reaction is tRNA(Lys) + L-lysine + ATP = L-lysyl-tRNA(Lys) + AMP + diphosphate. This Leptospira interrogans serogroup Icterohaemorrhagiae serovar Lai (strain 56601) protein is Lysine--tRNA ligase.